We begin with the raw amino-acid sequence, 385 residues long: Acetylornithine aminotransferase (385 aa).

Pyridoxal 5'-phosphate contacts are provided by residues 95-96 and Phe-122; that span reads GA. Arg-125 is a N(2)-acetyl-L-ornithine binding site. 208 to 211 is a binding site for pyridoxal 5'-phosphate; it reads DEIQ. Lys-237 carries the post-translational modification N6-(pyridoxal phosphate)lysine. Thr-265 lines the N(2)-acetyl-L-ornithine pocket. A pyridoxal 5'-phosphate-binding site is contributed by Thr-266.

It belongs to the class-III pyridoxal-phosphate-dependent aminotransferase family. ArgD subfamily. As to quaternary structure, homodimer. Pyridoxal 5'-phosphate is required as a cofactor.

Its subcellular location is the cytoplasm. It carries out the reaction N(2)-acetyl-L-ornithine + 2-oxoglutarate = N-acetyl-L-glutamate 5-semialdehyde + L-glutamate. It participates in amino-acid biosynthesis; L-arginine biosynthesis; N(2)-acetyl-L-ornithine from L-glutamate: step 4/4. This Bacillus subtilis (strain 168) protein is Acetylornithine aminotransferase.